Here is a 431-residue protein sequence, read N- to C-terminus: Glutamate--tRNA ligase 1 (431 aa).

A 'HIGH' region motif is present at residues 6 to 16 (PSPTGDMHIGN). A 'KMSKS' region motif is present at residues 235 to 239 (KMSKR). An ATP-binding site is contributed by Lys238.

The protein belongs to the class-I aminoacyl-tRNA synthetase family. Glutamate--tRNA ligase type 1 subfamily. In terms of assembly, monomer.

The protein localises to the cytoplasm. The enzyme catalyses tRNA(Glu) + L-glutamate + ATP = L-glutamyl-tRNA(Glu) + AMP + diphosphate. Catalyzes the attachment of glutamate to tRNA(Glu) in a two-step reaction: glutamate is first activated by ATP to form Glu-AMP and then transferred to the acceptor end of tRNA(Glu). The sequence is that of Glutamate--tRNA ligase 1 from Campylobacter jejuni subsp. jejuni serotype O:6 (strain 81116 / NCTC 11828).